The sequence spans 136 residues: Mitochondrial pyruvate carrier 1-like protein (136 aa).

The Mitochondrial matrix segment spans residues 2-19 (ARMAVLWRKMRDNFQSKE). Residues 20–42 (FREYVSSTHFWGPAFSWGLPLAA) traverse the membrane as a helical segment. Over 43-51 (FKDMKASPE) the chain is Mother cell cytoplasmic. A helical membrane pass occupies residues 52 to 74 (IISGRMTTALILYSAIFMRFAYR). Over 75–136 (VQPRNLLLMA…PGSQPPKQAS (62 aa)) the chain is Mitochondrial matrix. Residues 111 to 136 (EAKARDPPATAAAATSPGSQPPKQAS) are disordered. Positions 117 to 136 (PPATAAAATSPGSQPPKQAS) are enriched in low complexity.

Belongs to the mitochondrial pyruvate carrier (MPC) (TC 2.A.105) family.

Its subcellular location is the mitochondrion inner membrane. It catalyses the reaction pyruvate(out) + H(+)(out) = pyruvate(in) + H(+)(in). Functionally, mediates the uptake of pyruvate into mitochondria. This is Mitochondrial pyruvate carrier 1-like protein (MPC1L) from Homo sapiens (Human).